The primary structure comprises 875 residues: Phospholipase DDHD1 (875 aa).

3 disordered regions span residues 1-30 (MNYPGHGSPRSSERNGGRGGDGAAWELGSD), 101-153 (LRYY…GAAA), and 206-231 (RAQDPDGDHVCGPASPAGPASSSVED). 2 positions are modified to phosphoserine: serine 8 and serine 11. Gly residues predominate over residues 130 to 140 (SGGGGAAGGGP). Positions 217 to 228 (GPASPAGPASSS) are enriched in low complexity. Residue serine 540 is part of the active site. In terms of domain architecture, DDHD spans 614–861 (LKFKVENFFC…ALFLLTFMYK (248 aa)). Residue serine 726 is modified to Phosphoserine. The disordered stretch occupies residues 770–804 (RSSASQPSETSRDSIEDEKKPVASPPMTTVATQTL). Basic and acidic residues predominate over residues 779 to 790 (TSRDSIEDEKKP). The segment covering 795–804 (PMTTVATQTL) has biased composition (polar residues).

It belongs to the PA-PLA1 family. As to quaternary structure, forms homooligomers and, to a much smaller extent, heterooligomers with DDHD2. Interacts with SEC23A and SEC24C. As to expression, expressed in mature testis.

It localises to the cytoplasm. It catalyses the reaction a 1,2-diacyl-sn-glycero-3-phosphate + H2O = a 2-acyl-sn-glycerol 3-phosphate + a fatty acid + H(+). The enzyme catalyses a 1,2-diacyl-sn-glycero-3-phospho-(1D-myo-inositol) + H2O = a 2-acyl-sn-glycero-3-phospho-D-myo-inositol + a fatty acid + H(+). It carries out the reaction 1-octadecanoyl-2-(5Z,8Z,11Z,14Z-eicosatetraenoyl)-sn-glycero-3-phospho-(1D-myo-inositol) + H2O = 2-(5Z,8Z,11Z,14Z-eicosatetraenoyl)-sn-glycero-3-phospho-(1D-myo-inositol) + octadecanoate + H(+). The catalysed reaction is a 1-acyl-2-(5Z,8Z,11Z,14Z-eicosatetraenoyl)-sn-glycero-3-phospho-(1D-myo-inositol) + H2O = 2-(5Z,8Z,11Z,14Z-eicosatetraenoyl)-sn-glycero-3-phospho-(1D-myo-inositol) + a fatty acid + H(+). It catalyses the reaction 1,2-dihexadecanoyl-sn-glycero-3-phospho-(1D-myo-inositol) + H2O = 2-hexadecanoyl-sn-glycero-3-phospho-(1D-myo-inositol) + hexadecanoate + H(+). The enzyme catalyses 1,2-di-(9Z-octadecenoyl)-sn-glycero-3-phosphate + H2O = 2-(9Z-octadecenoyl)-sn-glycero-3-phosphate + (9Z)-octadecenoate + H(+). It carries out the reaction a 1-acyl-2-(5Z,8Z,11Z,14Z)-eicosatetraenoyl-sn-glycero-3-phosphate + H2O = 2-(5Z,8Z,11Z,14Z-eicosatetraenoyl)-sn-glycero-3-phosphate + a fatty acid + H(+). The catalysed reaction is 1-hexadecanoyl-2-(9Z-octadecenoyl)-sn-glycero-3-phosphate + H2O = 2-(9Z-octadecenoyl)-sn-glycero-3-phosphate + hexadecanoate + H(+). It catalyses the reaction 1-hexadecanoyl-2-(9Z-octadecenoyl)-sn-glycero-3-phospho-L-serine + H2O = 2-(9Z-octadecenoyl)-sn-glycero-3-phospho-L-serine + hexadecanoate + H(+). The enzyme catalyses 1,2-di-(5Z,8Z,11Z,14Z)-eicosatetraenoyl-sn-glycero-3-phosphate + H2O = 2-(5Z,8Z,11Z,14Z-eicosatetraenoyl)-sn-glycero-3-phosphate + (5Z,8Z,11Z,14Z)-eicosatetraenoate + H(+). It carries out the reaction 1-octadecanoyl-2-(5Z,8Z,11Z,14Z-eicosatetraenoyl)-sn-glycero-3-phosphate + H2O = 2-(5Z,8Z,11Z,14Z-eicosatetraenoyl)-sn-glycero-3-phosphate + octadecanoate + H(+). The catalysed reaction is a 1,2-diacyl-sn-glycero-3-phosphocholine + H2O = a 2-acyl-sn-glycero-3-phosphocholine + a fatty acid + H(+). It catalyses the reaction a 1,2-diacyl-sn-glycero-3-phosphoethanolamine + H2O = a 2-acyl-sn-glycero-3-phosphoethanolamine + a fatty acid + H(+). The enzyme catalyses a 1,2-diacyl-sn-glycero-3-phospho-L-serine + H2O = a 2-acyl-sn-glycero-3-phospho-L-serine + a fatty acid + H(+). It carries out the reaction a 1,2-diacyl-sn-glycero-3-phospho-(1'-sn-glycerol) + H2O = 2-acyl-sn-glycero-3-phospho-(1'-sn-glycerol) + a fatty acid + H(+). The catalysed reaction is 1-hexadecanoyl-2-(9Z-octadecenoyl)-sn-glycero-3-phospho-(1'-sn-glycerol) + H2O = 2-(9Z-octadecenoyl)-sn-glycero-3-phospho-(1'-sn-glycerol) + hexadecanoate + H(+). It catalyses the reaction 1-acyl-2-(5Z,8Z,11Z,14Z-eicosatetraenoyl)-sn-glycero-3-phosphocholine + H2O = 2-(5Z,8Z,11Z,14Z)-eicosatetraenoyl-sn-glycero-3-phosphocholine + a fatty acid + H(+). The enzyme catalyses 1-acyl-2-(5Z,8Z,11Z,14Z)-eicosatetraenoyl-sn-glycero-3-phosphoethanolamine + H2O = 2-(5Z,8Z,11Z,14Z)-eicosatetraenoyl-sn-glycero-3-phosphoethanolamine + a fatty acid + H(+). It carries out the reaction 1-(9Z-octadecenoyl)-2-(7Z,10Z,13Z,16Z,19Z-docosapentaenoyl)-sn-glycero-3-phospho-1D-myo-inositol + H2O = 2-(7Z,10Z,13Z,16Z,19Z-docosapentaenoyl)-sn-glycero-3-phospho-1D-myo-inositol + (9Z)-octadecenoate + H(+). The catalysed reaction is 1-(9Z-octadecenoyl)-2-(5Z,8Z,11Z,14Z-eicosatetraenoyl)-sn-glycero-3-phospho-1D-myo-inositol + H2O = 2-(5Z,8Z,11Z,14Z-eicosatetraenoyl)-sn-glycero-3-phospho-(1D-myo-inositol) + (9Z)-octadecenoate + H(+). It catalyses the reaction 1,2-di-(9Z-octadecenoyl)-sn-glycero-3-phospho-1D-myo-inositol + H2O = 2-(9Z-octadecenoyl)-sn-glycero-3-phospho-1D-myo-inositol + (9Z)-octadecenoate + H(+). The enzyme catalyses 1-(9Z-octadecenoyl)-2-(8Z,11Z,14Z-eicosatrienoyl)-sn-glycero-3-phospho-1D-myo-inositol + H2O = 2-(8Z,11Z,14Z-eicosatrienoyl)-sn-glycero-3-phospho-1D-myo-inositol + (9Z)-octadecenoate + H(+). It carries out the reaction 1,2-di-(9Z-octadecenoyl)-sn-glycero-3-phosphocholine + H2O = (9Z-octadecenoyl)-sn-glycero-3-phosphocholine + (9Z)-octadecenoate + H(+). It participates in phospholipid metabolism; phosphatidylinositol metabolism. In terms of biological role, phospholipase A1 (PLA1) that hydrolyzes ester bonds at the sn-1 position of glycerophospholipids producing a free fatty acid and a lysophospholipid. Prefers phosphatidate (1,2-diacyl-sn-glycero-3-phosphate, PA) as substrate in vitro, but can efficiently hydrolyze phosphatidylinositol (1,2-diacyl-sn-glycero-3-phospho-(1D-myo-inositol), PI), as well as a range of other glycerophospholipid substrates such as phosphatidylcholine (1,2-diacyl-sn-glycero-3-phosphocholine, PC), phosphatidylethanolamine (1,2-diacyl-sn-glycero-3-phosphoethanolamine, PE), phosphatidylserine (1,2-diacyl-sn-glycero-3-phospho-L-serine, PS) and phosphatidylglycerol (1,2-diacyl-sn-glycero-3-phospho-(1'-sn-glycerol), PG). Involved in the regulation of the endogenous content of polyunsaturated PI and PS lipids in the nervous system. Changes in these lipids extend to downstream metabolic products like PI phosphates PIP and PIP2, which play fundamental roles in cell biology. Regulates mitochondrial morphology. These dynamic changes may be due to PA hydrolysis at the mitochondrial surface. May play a regulatory role in spermatogenesis or sperm function. The chain is Phospholipase DDHD1 (DDHD1) from Bos taurus (Bovine).